A 957-amino-acid chain; its full sequence is AP2-associated protein kinase 1 (957 aa).

Methionine 1 is subject to N-acetylmethionine. Basic and acidic residues predominate over residues 1–11; that stretch reads MKKFFDSRREQ. The interval 1–25 is disordered; sequence MKKFFDSRREQGGSGLGSGSSGGGG. The segment covering 12 to 25 has biased composition (gly residues); it reads GGSGLGSGSSGGGG. Serine 14 is subject to Phosphoserine. The region spanning 46-315 is the Protein kinase domain; sequence VTVDEVLAEG…QVSYFSFKLL (270 aa). ATP contacts are provided by residues 52–60 and lysine 74; that span reads LAEGGFAIV. The Proton acceptor role is filled by aspartate 176. Tyrosine 234 carries the phosphotyrosine modification. At serine 235 the chain carries Phosphoserine. 2 disordered regions span residues 326 to 506 and 563 to 629; these read NSPI…AVHP and TAAA…AGHR. Residues threonine 354 and threonine 389 each carry the phosphothreonine modification. Omega-N-methylarginine is present on arginine 391. Pro residues predominate over residues 436–448; sequence PQAPPTSQQPPSA. Threonine 441 carries the post-translational modification Phosphothreonine. Low complexity-rich tracts occupy residues 449–506 and 563–601; these read PAQA…AVHP and TAAA…KVQT. Threonine 602 is subject to Phosphothreonine. Over residues 607–617 the composition is skewed to polar residues; the sequence is IQGQKLGSLTP. Position 614 is a phosphoserine (serine 614). Threonine 616 is modified (phosphothreonine). Residues serine 619, serine 620, serine 633, and serine 646 each carry the phosphoserine modification. At threonine 649 the chain carries Phosphothreonine. Residues 660-697 are disordered; sequence SLNKSKSATTTPSGSPRASQQNVYNPSEGSTWNPFDDD. Polar residues predominate over residues 668-692; the sequence is TTTPSGSPRASQQNVYNPSEGSTWN. Tyrosine 683 carries the phosphotyrosine modification. 4 positions are modified to phosphoserine: serine 727, serine 842, serine 933, and serine 934. Residues 819 to 956 are clathrin-binding domain (CBD); that stretch reads EKADVAVESL…SLLLVDQLID (138 aa). Disordered stretches follow at residues 832 to 855 and 919 to 941; these read LEPP…TDSL and VLIT…ESSL. Polar residues predominate over residues 840 to 855; sequence LPSQTESVTSNRTDSL. Over residues 927-940 the composition is skewed to low complexity; it reads GGHSRNSSGSSESS.

Belongs to the protein kinase superfamily. Ser/Thr protein kinase family. In terms of assembly, interacts (via CBD domain) with clathrin. Interacts with AP-2 complex. Interacts with NUMB. Interacts with alpha-adaptin. Interacts with EPS15 isoform 2. Interacts with membrane-bound activated NOTCH1 but not with the inactive full-length form of NOTCH1. Preferentially interacts with monoubiquitinated activated NOTCH1 compared to the non-ubiquitinated form. In terms of processing, autophosphorylated. Detected in brain (at protein level).

Its subcellular location is the cell membrane. The protein resides in the membrane. It is found in the clathrin-coated pit. It localises to the presynapse. The catalysed reaction is L-seryl-[protein] + ATP = O-phospho-L-seryl-[protein] + ADP + H(+). It catalyses the reaction L-threonyl-[protein] + ATP = O-phospho-L-threonyl-[protein] + ADP + H(+). Its activity is regulated as follows. Stimulated by clathrin. Regulates clathrin-mediated endocytosis by phosphorylating the AP2M1/mu2 subunit of the adaptor protein complex 2 (AP-2) which ensures high affinity binding of AP-2 to cargo membrane proteins during the initial stages of endocytosis. Preferentially, may phosphorylate substrates on threonine residues. Regulates phosphorylation of other AP-2 subunits as well as AP-2 localization and AP-2-mediated internalization of ligand complexes. Phosphorylates NUMB and regulates its cellular localization, promoting NUMB localization to endosomes. Binds to and stabilizes the activated form of NOTCH1, increases its localization in endosomes and regulates its transcriptional activity. This is AP2-associated protein kinase 1 (AAK1) from Bos taurus (Bovine).